Here is a 618-residue protein sequence, read N- to C-terminus: Pyranose 2-oxidase (618 aa).

His170 is modified (tele-8alpha-FAD histidine). Residues Gln441 and His443 each contribute to the substrate site. His540 functions as the Proton acceptor in the catalytic mechanism. The active site involves Asn583.

Belongs to the GMC oxidoreductase family. In terms of assembly, homotetramer. The cofactor is FAD.

The catalysed reaction is D-glucose + O2 = 2-dehydro-D-glucose + H2O2. In terms of biological role, catalyzes the oxidation of various aldopyranoses and disaccharides on carbon-2 to the corresponding 2-keto sugars concomitant with the reduction of O(2) to H(2)O(2). The protein is Pyranose 2-oxidase (p2ox) of Lyophyllum shimeji (Hon-shimeji).